Consider the following 198-residue polypeptide: MTLRCLEPSGNGADRTRSQWGTAGLPEEQSPEAARLAKALRELSQTGWYWGSMTVNEAKEKLKEAPEGTFLIRDSSHSDYLLTISVKTSAGPTNLRIEYQDGKFRLDSIICVKSKLKQFDSVVHLIDYYVQMCKDKRTGPEAPRNGTVHLYLTKPLYTSAPTLQHFCRLAINKCTGTIWGLPLPTRLKDYLEEYKFQV.

The interval 1 to 29 (MTLRCLEPSGNGADRTRSQWGTAGLPEEQ) is disordered. The interaction with AREL1 stretch occupies residues 1-75 (MTLRCLEPSG…PEGTFLIRDS (75 aa)). Ser30 is modified (phosphoserine). One can recognise an SH2 domain in the interval 48–156 (WYWGSMTVNE…TVHLYLTKPL (109 aa)). Ser52 is modified (phosphoserine; by PKC). Positions 151-197 (YLTKPLYTSAPTLQHFCRLAINKCTGTIWGLPLPTRLKDYLEEYKFQ) constitute an SOCS box domain. Residue Lys173 forms a Glycyl lysine isopeptide (Lys-Gly) (interchain with G-Cter in ubiquitin) linkage.

In terms of assembly, substrate-recognition component of the ECS(SOCS2) complex, composed of SOCS2, CUL5, ELOB, ELOC and RNF7/RBX2. Interacts with IGF1R. Interacts with DCUN1D1. Ubiquitinated; mediated by AREL1 and leading to its subsequent proteasomal degradation. Ubiquitination is dependent on phosphorylation at Ser-52, by PKC and is stimulated by LPS. In terms of processing, phosphorylation at Ser-52 by PKC facilitates its ubiquitination and proteasomal degradation. Expressed primarily in the testis, some expression in liver and lung.

The protein resides in the cytoplasm. It participates in protein modification; protein ubiquitination. In terms of biological role, substrate-recognition component of a cullin-5-RING E3 ubiquitin-protein ligase complex (ECS complex, also named CRL5 complex), which mediates the ubiquitination and subsequent proteasomal degradation of target proteins, such as EPOR and GHR. Specifically recognizes and binds phosphorylated proteins via its SH2 domain, promoting their ubiquitination. The ECS(SOCS2) complex acts as a key regulator of growth hormone receptor (GHR) levels by mediating ubiquitination and degradation of GHR, following GHR phosphorylation by JAK2. The ECS(SOCS2) also catalyzes ubiquitination and degradation of JAK2-phosphorylated EPOR. The polypeptide is Suppressor of cytokine signaling 2 (Mus musculus (Mouse)).